The following is a 24-amino-acid chain: Attacin (24 aa).

The protein belongs to the attacin/sarcotoxin-2 family.

The protein localises to the secreted. Hemolymph antibacterial protein. The protein is Attacin of Heliothis virescens (Tobacco budworm moth).